The chain runs to 206 residues: Ribosomal RNA large subunit methyltransferase E (206 aa).

The S-adenosyl-L-methionine site is built by Gly60, Trp62, Asp80, Asp96, and Asp121. Catalysis depends on Lys161, which acts as the Proton acceptor.

The protein belongs to the class I-like SAM-binding methyltransferase superfamily. RNA methyltransferase RlmE family.

Its subcellular location is the cytoplasm. It catalyses the reaction uridine(2552) in 23S rRNA + S-adenosyl-L-methionine = 2'-O-methyluridine(2552) in 23S rRNA + S-adenosyl-L-homocysteine + H(+). Its function is as follows. Specifically methylates the uridine in position 2552 of 23S rRNA at the 2'-O position of the ribose in the fully assembled 50S ribosomal subunit. This is Ribosomal RNA large subunit methyltransferase E from Legionella pneumophila (strain Paris).